The chain runs to 376 residues: Cysteine synthase 1 (376 aa).

The N-terminal 16 residues, 1-16, are a transit peptide targeting the mitochondrion; the sequence is MFRHGVRTFATTSLRR. K79 carries the post-translational modification N6-(pyridoxal phosphate)lysine. Residues N109, 215–219, and S314 each bind pyridoxal 5'-phosphate; that span reads GTGGT.

This sequence belongs to the cysteine synthase/cystathionine beta-synthase family. Pyridoxal 5'-phosphate serves as cofactor.

It localises to the mitochondrion. The enzyme catalyses O-succinyl-L-serine + hydrogen sulfide = L-cysteine + succinate. The catalysed reaction is O-acetyl-L-serine + hydrogen sulfide = L-cysteine + acetate. It participates in amino-acid biosynthesis; L-cysteine biosynthesis; L-cysteine from L-serine: step 2/2. Its function is as follows. Catalyzes the conversion of O-succinyl-L-serine into cysteine, the last step in the cysteine biosynthesis pathway. Can also use O-acetyl-L-serine. The sequence is that of Cysteine synthase 1 (cys-17) from Neurospora crassa (strain ATCC 24698 / 74-OR23-1A / CBS 708.71 / DSM 1257 / FGSC 987).